The following is a 225-amino-acid chain: ATP synthase subunit a (225 aa).

The next 6 helical transmembrane spans lie at 18-38 (LSLN…MFWL), 73-93 (ILIS…FPYI), 100-120 (MTLT…FGWI), 126-146 (MFTH…MVLI), 156-176 (GTLA…LTLL), and 187-207 (IMLF…AVAM).

This sequence belongs to the ATPase A chain family. F-type ATPases have 2 components, CF(1) - the catalytic core - and CF(0) - the membrane proton channel. CF(1) has five subunits: alpha(3), beta(3), gamma(1), delta(1), epsilon(1). CF(0) has three main subunits: a, b and c.

The protein resides in the mitochondrion inner membrane. Its function is as follows. Mitochondrial membrane ATP synthase (F(1)F(0) ATP synthase or Complex V) produces ATP from ADP in the presence of a proton gradient across the membrane which is generated by electron transport complexes of the respiratory chain. F-type ATPases consist of two structural domains, F(1) - containing the extramembraneous catalytic core and F(0) - containing the membrane proton channel, linked together by a central stalk and a peripheral stalk. During catalysis, ATP synthesis in the catalytic domain of F(1) is coupled via a rotary mechanism of the central stalk subunits to proton translocation. Key component of the proton channel; it may play a direct role in the translocation of protons across the membrane. The chain is ATP synthase subunit a (ATP6) from Locusta migratoria (Migratory locust).